The sequence spans 805 residues: Angiotensin-converting enzyme 2 (805 aa).

Residues 1 to 17 form the signal peptide; the sequence is MSGSFWLLLSFAALTAA. Topologically, residues 18–740 are extracellular; it reads QSTTEELAKT…LSPPYRPPVT (723 aa). The region spanning 19–607 is the Peptidase M2 domain; the sequence is STTEELAKTF…QNRNSFVGWD (589 aa). Positions 30-41 are interaction with SARS S protein; sequence ETFNYEAQELSY. Asn53 carries an N-linked (GlcNAc...) asparagine glycan. Interaction with SARS S protein regions lie at residues 82 to 84 and 90 to 93; these read TYP and DAKI. A disulfide bridge links Cys133 with Cys141. Arg169 is a chloride binding site. N-linked (GlcNAc...) asparagine glycosylation occurs at Asn216. Position 273 (Arg273) interacts with substrate. Asn322 is a glycosylation site (N-linked (GlcNAc...) asparagine). A disulfide bond links Cys344 and Cys361. 345 to 346 provides a ligand contact to substrate; it reads HP. The tract at residues 353–357 is interaction with SARS S protein; it reads KGDFR. A Zn(2+)-binding site is contributed by His374. Glu375 serves as the catalytic Proton acceptor. Zn(2+) contacts are provided by His378 and Glu402. Chloride-binding residues include Trp477 and Lys481. His505 functions as the Proton donor in the catalytic mechanism. Tyr515 serves as a coordination point for substrate. An intrachain disulfide couples Cys530 to Cys542. A glycan (N-linked (GlcNAc...) asparagine) is linked at Asn546. The region spanning 614–805 is the Collectrin-like domain; the sequence is SDQSIKVRIS…QHADDVQTSF (192 aa). The interval 652 to 659 is essential for cleavage by ADAM17; sequence REYFSKVK. Residues Asn660 and Asn690 are each glycosylated (N-linked (GlcNAc...) asparagine). The tract at residues 697 to 716 is essential for cleavage by TMPRSS11D and TMPRSS2; it reads RSEVEDAIRMSRSRINDAFR. A helical membrane pass occupies residues 741–761; the sequence is IWLIVFGVVMGAIVVGIVLLI. Over 762 to 805 the chain is Cytoplasmic; that stretch reads VSGIRNRRKNDQAGSEENPYASVDLNKGENNPGFQHADDVQTSF. The segment at 771–805 is disordered; sequence NDQAGSEENPYASVDLNKGENNPGFQHADDVQTSF. Residues 778-786 carry the LIR motif; the sequence is ENPYASVDL. Phosphotyrosine is present on Tyr781. Residues 781–784 carry the Endocytic sorting signal motif; sequence YASV. Residues 781-785 carry the SH2-binding motif; the sequence is YASVD. Ser783 carries the post-translational modification Phosphoserine. Residues 792 to 795 carry the PTB motif; the sequence is NPGF. Residues 803 to 805 carry the PDZ-binding motif; the sequence is TSF.

The protein belongs to the peptidase M2 family. As to quaternary structure, homodimer. Interacts with the catalytically active form of TMPRSS2. Interacts with SLC6A19; this interaction is essential for expression and function of SLC6A19 in intestine. Interacts with ITGA5:ITGB1. Probably interacts (via endocytic sorting signal motif) with AP2M1; the interaction is inhibited by phosphorylation of Tyr-781. Interacts (via PDZ-binding motif) with NHERF1 (via PDZ domains); the interaction may enhance ACE2 membrane residence. (Microbial infection) Interacts with SARS-CoV S protein. Zn(2+) serves as cofactor. Requires chloride as cofactor. Proteolytic cleavage by ADAM17 generates a secreted form. Also cleaved by serine proteases: TMPRSS2, TMPRSS11D and HPN/TMPRSS1. In terms of processing, phosphorylated. Phosphorylation at Tyr-781 probably inhibits interaction with AP2M1 and enables interactions with proteins containing SH2 domains.

It localises to the secreted. The protein localises to the cell membrane. It is found in the cytoplasm. Its subcellular location is the cell projection. The protein resides in the cilium. It localises to the apical cell membrane. The enzyme catalyses angiotensin II + H2O = angiotensin-(1-7) + L-phenylalanine. The catalysed reaction is angiotensin I + H2O = angiotensin-(1-9) + L-leucine. In terms of biological role, essential counter-regulatory carboxypeptidase of the renin-angiotensin hormone system that is a critical regulator of blood volume, systemic vascular resistance, and thus cardiovascular homeostasis. Converts angiotensin I to angiotensin 1-9, a nine-amino acid peptide with anti-hypertrophic effects in cardiomyocytes, and angiotensin II to angiotensin 1-7, which then acts as a beneficial vasodilator and anti-proliferation agent, counterbalancing the actions of the vasoconstrictor angiotensin II. Also removes the C-terminal residue from three other vasoactive peptides, neurotensin, kinetensin, and des-Arg bradykinin, but is not active on bradykinin. Also cleaves other biological peptides, such as apelins, casomorphins and dynorphin A. Plays an important role in amino acid transport by acting as binding partner of amino acid transporter SLC6A19 in intestine, regulating trafficking, expression on the cell surface, and its catalytic activity. Its function is as follows. (Microbial infection) Acts as a receptor for human coronavirus SARS. This is Angiotensin-converting enzyme 2 (ACE2) from Paguma larvata (Masked palm civet).